The sequence spans 635 residues: 1-deoxy-D-xylulose-5-phosphate synthase (635 aa).

Residues His77 and 118-120 each bind thiamine diphosphate; that span reads GHA. Position 150 (Asp150) interacts with Mg(2+). Thiamine diphosphate contacts are provided by residues 151–152, Asn179, Tyr290, and Glu372; that span reads AS. Asn179 provides a ligand contact to Mg(2+).

This sequence belongs to the transketolase family. DXPS subfamily. Homodimer. The cofactor is Mg(2+). It depends on thiamine diphosphate as a cofactor.

It carries out the reaction D-glyceraldehyde 3-phosphate + pyruvate + H(+) = 1-deoxy-D-xylulose 5-phosphate + CO2. The protein operates within metabolic intermediate biosynthesis; 1-deoxy-D-xylulose 5-phosphate biosynthesis; 1-deoxy-D-xylulose 5-phosphate from D-glyceraldehyde 3-phosphate and pyruvate: step 1/1. In terms of biological role, catalyzes the acyloin condensation reaction between C atoms 2 and 3 of pyruvate and glyceraldehyde 3-phosphate to yield 1-deoxy-D-xylulose-5-phosphate (DXP). The chain is 1-deoxy-D-xylulose-5-phosphate synthase from Leptospira borgpetersenii serovar Hardjo-bovis (strain JB197).